The primary structure comprises 734 residues: Photosystem I P700 chlorophyll a apoprotein A2 (734 aa).

A run of 8 helical transmembrane segments spans residues 46–69 (IFAS…FHVA), 135–158 (LYTG…LHLQ), 175–199 (LNHH…HVAI), 273–291 (MAHH…GHMY), 330–353 (IHFQ…QHMY), 369–395 (AALY…IFFI), 417–439 (AIIS…LYVH), and 517–535 (FLVH…LILV). Positions 559 and 568 each coordinate [4Fe-4S] cluster. The next 2 membrane-spanning stretches (helical) occupy residues 575–596 (AFYL…YWHW) and 643–665 (LSVW…MFLI). Chlorophyll a-binding residues include histidine 654, methionine 662, and tyrosine 670. Tryptophan 671 is a binding site for phylloquinone. Residues 707–727 (LVGLAHFSVGYIFTYAAFLIA) form a helical membrane-spanning segment.

It belongs to the PsaA/PsaB family. In terms of assembly, the PsaA/B heterodimer binds the P700 chlorophyll special pair and subsequent electron acceptors. PSI consists of a core antenna complex that captures photons, and an electron transfer chain that converts photonic excitation into a charge separation. The eukaryotic PSI reaction center is composed of at least 11 subunits. P700 is a chlorophyll a/chlorophyll a' dimer, A0 is one or more chlorophyll a, A1 is one or both phylloquinones and FX is a shared 4Fe-4S iron-sulfur center. serves as cofactor.

It localises to the plastid. The protein resides in the chloroplast thylakoid membrane. The enzyme catalyses reduced [plastocyanin] + hnu + oxidized [2Fe-2S]-[ferredoxin] = oxidized [plastocyanin] + reduced [2Fe-2S]-[ferredoxin]. In terms of biological role, psaA and PsaB bind P700, the primary electron donor of photosystem I (PSI), as well as the electron acceptors A0, A1 and FX. PSI is a plastocyanin-ferredoxin oxidoreductase, converting photonic excitation into a charge separation, which transfers an electron from the donor P700 chlorophyll pair to the spectroscopically characterized acceptors A0, A1, FX, FA and FB in turn. Oxidized P700 is reduced on the lumenal side of the thylakoid membrane by plastocyanin. The chain is Photosystem I P700 chlorophyll a apoprotein A2 from Triticum aestivum (Wheat).